The primary structure comprises 282 residues: MSSYANHQALAGLTLGKSTDYRDTYDASLLQGVPRSLNRDPLGLKADNLPFHGTDIWTLYELSWLNAKGLPQVAVGHVELDYTSVNLIESKSFKLYLNSFNQTRFNNWDEVRQTLERDLSTCAQGKVSVALYRLDELEGQPIGHFNGTCIDDQDITIDNYEFTTDYLENATSGEKVVEETLVSHLLKSNCLITHQPDWGSIQIQYRGRQIDREKLLRYLVSFRHHNEFHEQCVERIFNDLLRFCQPEKLSVYARYTRRGGLDINPWRSNSDFVPSTTRLVRQ.

Position 88 to 90 (88 to 90) interacts with substrate; sequence IES. 90–91 contributes to the NADPH binding site; that stretch reads SK. The active-site Thioimide intermediate is C190. The active-site Proton donor is D197. A substrate-binding site is contributed by 229–230; sequence HE. Position 258–259 (258–259) interacts with NADPH; the sequence is RG.

The protein belongs to the GTP cyclohydrolase I family. QueF type 2 subfamily. Homodimer.

Its subcellular location is the cytoplasm. The enzyme catalyses 7-aminomethyl-7-carbaguanine + 2 NADP(+) = 7-cyano-7-deazaguanine + 2 NADPH + 3 H(+). Its pathway is tRNA modification; tRNA-queuosine biosynthesis. Catalyzes the NADPH-dependent reduction of 7-cyano-7-deazaguanine (preQ0) to 7-aminomethyl-7-deazaguanine (preQ1). The protein is NADPH-dependent 7-cyano-7-deazaguanine reductase of Escherichia coli O139:H28 (strain E24377A / ETEC).